A 406-amino-acid polypeptide reads, in one-letter code: CRISP/Allergen/PR-1 (406 aa).

The first 18 residues, 1-18 (MHFQVILMMMWLWLEAEG), serve as a signal peptide directing secretion. N-linked (GlcNAc...) asparagine glycosylation is present at asparagine 39. The region spanning 58-205 (LREHNKLRSR…TFKDLYTCNY (148 aa)) is the SCP domain.

This sequence belongs to the CRISP family. Post-translationally, contains 9 disulfide bonds. As to expression, expressed by the venom gland.

The protein localises to the secreted. The sequence is that of CRISP/Allergen/PR-1 from Trittame loki (Brush-footed trapdoor spider).